The following is a 222-amino-acid chain: U-scoloptoxin(11)-Sm5a (222 aa).

It belongs to the scoloptoxin-11 family. Post-translationally, contains 8 disulfide bonds. In terms of tissue distribution, expressed by the venom gland.

It is found in the secreted. The protein is U-scoloptoxin(11)-Sm5a of Scolopendra morsitans (Tanzanian blue ringleg centipede).